The sequence spans 330 residues: Ketol-acid reductoisomerase (NADP(+)) (330 aa).

One can recognise a KARI N-terminal Rossmann domain in the interval 2–182; that stretch reads VETFYEKDAD…GCTRAGVIKT (181 aa). Residues 25–28, Lys-48, Ser-51, Ser-53, and 83–86 each bind NADP(+); these read YGSQ and DEVQ. His-108 is a catalytic residue. Residue Gly-134 participates in NADP(+) binding. The KARI C-terminal knotted domain occupies 183-328; the sequence is TFKEETETDL…EKLRAMMPWI (146 aa). Mg(2+)-binding residues include Asp-191, Glu-195, Glu-227, and Glu-231. Residue Ser-252 coordinates substrate.

This sequence belongs to the ketol-acid reductoisomerase family. Mg(2+) is required as a cofactor.

The catalysed reaction is (2R)-2,3-dihydroxy-3-methylbutanoate + NADP(+) = (2S)-2-acetolactate + NADPH + H(+). The enzyme catalyses (2R,3R)-2,3-dihydroxy-3-methylpentanoate + NADP(+) = (S)-2-ethyl-2-hydroxy-3-oxobutanoate + NADPH + H(+). It participates in amino-acid biosynthesis; L-isoleucine biosynthesis; L-isoleucine from 2-oxobutanoate: step 2/4. The protein operates within amino-acid biosynthesis; L-valine biosynthesis; L-valine from pyruvate: step 2/4. Its function is as follows. Involved in the biosynthesis of branched-chain amino acids (BCAA). Catalyzes an alkyl-migration followed by a ketol-acid reduction of (S)-2-acetolactate (S2AL) to yield (R)-2,3-dihydroxy-isovalerate. In the isomerase reaction, S2AL is rearranged via a Mg-dependent methyl migration to produce 3-hydroxy-3-methyl-2-ketobutyrate (HMKB). In the reductase reaction, this 2-ketoacid undergoes a metal-dependent reduction by NADPH to yield (R)-2,3-dihydroxy-isovalerate. The sequence is that of Ketol-acid reductoisomerase (NADP(+)) from Petrotoga mobilis (strain DSM 10674 / SJ95).